Here is a 153-residue protein sequence, read N- to C-terminus: DNA gyrase inhibitor (153 aa).

Belongs to the DNA gyrase inhibitor family. Interacts with DNA gyrase.

It is found in the cytoplasm. Functionally, inhibits the supercoiling activity of DNA gyrase. Acts by inhibiting DNA gyrase at an early step, prior to (or at the step of) binding of DNA by the gyrase. It protects cells against toxins that target DNA gyrase, by inhibiting activity of these toxins and reducing the formation of lethal double-strand breaks in the cell. The sequence is that of DNA gyrase inhibitor from Pantoea sp. (strain At-9b).